The sequence spans 2179 residues: Genome polyprotein (2179 aa).

4 disordered regions span residues Phe-503–Asp-531, Gln-623–Gln-678, Arg-703–Phe-738, and Glu-753–Met-847. Polar residues-rich tracts occupy residues Asp-630–His-642 and Thr-659–Gln-678. Over residues Ser-758–Glu-770 the composition is skewed to polar residues. Residues Ser-783–Thr-806 show a composition bias toward low complexity. Residues Glu-819–Thr-831 show a composition bias toward acidic residues. The CCHC-type zinc-finger motif lies at Cys-1112–Cys-1125. Asp-1226 acts as the For protease activity; shared with dimeric partner in catalysis. A Reverse transcriptase domain is found at Gln-1409–Phe-1591. Residues Asp-1479, Asp-1542, and Asp-1543 each coordinate Mg(2+). 3 disordered regions span residues Gln-1822–His-1848, Asn-2114–Cys-2144, and Tyr-2160–Val-2179. Residues Ser-1827–Thr-1840 show a composition bias toward low complexity. Basic residues predominate over residues Pro-2120 to Cys-2144. Polar residues predominate over residues Thr-2162–Val-2179.

It belongs to the Petuviruses genome polyprotein family.

The catalysed reaction is DNA(n) + a 2'-deoxyribonucleoside 5'-triphosphate = DNA(n+1) + diphosphate. In terms of biological role, encodes presumably for at least four polypeptides: Movement protein (MP), capsid protein (CP), Protease (PR), and reverse transcriptase (RT). The protein is Genome polyprotein of Petunia vein clearing virus (isolate Shepherd) (PVCV).